We begin with the raw amino-acid sequence, 263 residues long: uncharacterized protein (263 aa).

It belongs to the AtsA family.

Its subcellular location is the plastid. The protein localises to the chloroplast. This is an uncharacterized protein from Porphyra purpurea (Red seaweed).